Here is a 171-residue protein sequence, read N- to C-terminus: Histone H1, gonadal (171 aa).

Disordered regions lie at residues 1-40 (AASP…AHPP) and 133-171 (AKAK…KAKP). Basic residues predominate over residues 9 to 35 (ASPRKSPKKSPRKSPKKKSPRKRKARS). Positions 37–111 (AHPPVIDMIT…GATGRFRVGA (75 aa)) constitute an H15 domain.

Belongs to the histone H1/H5 family. As to expression, sperm.

It is found in the nucleus. The protein localises to the chromosome. In terms of biological role, histones H1 are necessary for the condensation of nucleosome chains into higher-order structures. The polypeptide is Histone H1, gonadal (Echinolampas crassa (Sea urchin)).